The primary structure comprises 270 residues: MGNTSSERAALERHGGHKTPRRDSSGGTKDGDRPKILMDSPEDADLFHSEEIKAPEKEEFLAWQHDLEVNDKAPAQARPTVFRWTGGGKEVYLSGSFNNWSKLPLTRSHNNFVAILDLPEGEHQYKFFVDGQWTHDPSEPIVTSQLGTVNNIIQVKKTDFEVFDALMVDSQKCSDVSELSSSPPGPYHQEPYVCKPEERFRAPPILPPHLLQVILNKDTGISCDPALLPEPNHVMLNHLYALSIKDGVMVLSATHRYKKKYVTTLLYKPI.

The disordered stretch occupies residues 1–43 (MGNTSSERAALERHGGHKTPRRDSSGGTKDGDRPKILMDSPED). Gly-2 carries the N-myristoyl glycine lipid modification. Thr-4 carries the phosphothreonine modification. Residues Ser-5 and Ser-6 each carry the phosphoserine modification. Thr-19 carries the post-translational modification Phosphothreonine. A compositionally biased stretch (basic and acidic residues) spans 21 to 36 (RRDSSGGTKDGDRPKI). Residues Ser-24 and Ser-25 each carry the phosphoserine; by autocatalysis modification. Phosphoserine is present on residues Ser-40, Ser-96, Ser-101, and Ser-108. Residues 68–163 (EVNDKAPAQA…QVKKTDFEVF (96 aa)) are glycogen-binding domain. At Thr-148 the chain carries Phosphothreonine. Ser-182 is subject to Phosphoserine.

The protein belongs to the 5'-AMP-activated protein kinase beta subunit family. In terms of assembly, AMPK is a heterotrimer of an alpha catalytic subunit (PRKAA1 or PRKAA2), a beta (PRKAB1 or PRKAB2) and a gamma non-catalytic subunits (PRKAG1, PRKAG2 or PRKAG3). Interacts with FNIP1 and FNIP2. In terms of processing, phosphorylated when associated with the catalytic subunit (PRKAA1 or PRKAA2). Phosphorylated by ULK1; leading to negatively regulate AMPK activity and suggesting the existence of a regulatory feedback loop between ULK1 and AMPK.

In terms of biological role, non-catalytic subunit of AMP-activated protein kinase (AMPK), an energy sensor protein kinase that plays a key role in regulating cellular energy metabolism. In response to reduction of intracellular ATP levels, AMPK activates energy-producing pathways and inhibits energy-consuming processes: inhibits protein, carbohydrate and lipid biosynthesis, as well as cell growth and proliferation. AMPK acts via direct phosphorylation of metabolic enzymes, and by longer-term effects via phosphorylation of transcription regulators. Also acts as a regulator of cellular polarity by remodeling the actin cytoskeleton; probably by indirectly activating myosin. Beta non-catalytic subunit acts as a scaffold on which the AMPK complex assembles, via its C-terminus that bridges alpha (PRKAA1 or PRKAA2) and gamma subunits (PRKAG1, PRKAG2 or PRKAG3). This Homo sapiens (Human) protein is 5'-AMP-activated protein kinase subunit beta-1 (PRKAB1).